The chain runs to 711 residues: Polyribonucleotide nucleotidyltransferase (711 aa).

Mg(2+) contacts are provided by Asp-487 and Asp-493. Residues 554 to 613 form the KH domain; that stretch reads PRIHTMKISAEKIKDVIGKGGAVIRALTEETGTTIEIEDDGTIKIAATEGAAAKEAIRRI. Residues 623-691 form the S1 motif domain; it reads GRIYTGKVAR…RQGRVRLSMK (69 aa). Positions 691–711 are disordered; it reads KEAVEKPAEEAAAEAPAAKEE.

It belongs to the polyribonucleotide nucleotidyltransferase family. Component of the RNA degradosome, which is a multiprotein complex involved in RNA processing and mRNA degradation. It depends on Mg(2+) as a cofactor.

The protein localises to the cytoplasm. It carries out the reaction RNA(n+1) + phosphate = RNA(n) + a ribonucleoside 5'-diphosphate. In terms of biological role, involved in mRNA degradation. Catalyzes the phosphorolysis of single-stranded polyribonucleotides processively in the 3'- to 5'-direction. The chain is Polyribonucleotide nucleotidyltransferase from Vibrio parahaemolyticus serotype O3:K6 (strain RIMD 2210633).